Here is a 243-residue protein sequence, read N- to C-terminus: MSDDTGEFTDGSTESPADADGAGRRRAVDNGLTERQRTILEVIRASVTSRGYPPSIREIGDAVGLTSTSSVAHQLRTLERKGYLRRDPNRPRAVDVRAADDPAAAAVVTTDVAGSDALPEPTFVPVLGRIAAGGPILAEEAVEDVFPLPRELVGEGSLFLLKVVGDSMVDAAICDGDWVVVRQQNVADNGDIVAAMIDGEATVKTFKRARGQVWLMPHNPAYDPIPGNEAAVLGKVVTVIRKI.

The interval 1-30 (MSDDTGEFTDGSTESPADADGAGRRRAVDN) is disordered. Over residues 21 to 30 (GAGRRRAVDN) the composition is skewed to basic and acidic residues. Residues 56 to 76 (IREIGDAVGLTSTSSVAHQLR) constitute a DNA-binding region (H-T-H motif). Catalysis depends on for autocatalytic cleavage activity residues S167 and K204.

It belongs to the peptidase S24 family. Homodimer.

The enzyme catalyses Hydrolysis of Ala-|-Gly bond in repressor LexA.. Represses a number of genes involved in the response to DNA damage (SOS response), including recA and lexA. In the presence of single-stranded DNA, RecA interacts with LexA causing an autocatalytic cleavage which disrupts the DNA-binding part of LexA, leading to derepression of the SOS regulon and eventually DNA repair. In Mycolicibacterium smegmatis (strain ATCC 700084 / mc(2)155) (Mycobacterium smegmatis), this protein is LexA repressor.